Consider the following 283-residue polypeptide: 4-diphosphocytidyl-2-C-methyl-D-erythritol kinase (283 aa).

Lys-10 is an active-site residue. 95 to 105 (PVAAGLGGGSS) serves as a coordination point for ATP. The active site involves Asp-137.

The protein belongs to the GHMP kinase family. IspE subfamily.

The enzyme catalyses 4-CDP-2-C-methyl-D-erythritol + ATP = 4-CDP-2-C-methyl-D-erythritol 2-phosphate + ADP + H(+). Its pathway is isoprenoid biosynthesis; isopentenyl diphosphate biosynthesis via DXP pathway; isopentenyl diphosphate from 1-deoxy-D-xylulose 5-phosphate: step 3/6. Functionally, catalyzes the phosphorylation of the position 2 hydroxy group of 4-diphosphocytidyl-2C-methyl-D-erythritol. The protein is 4-diphosphocytidyl-2-C-methyl-D-erythritol kinase of Limosilactobacillus fermentum (strain NBRC 3956 / LMG 18251) (Lactobacillus fermentum).